Consider the following 518-residue polypeptide: Nitrogenase iron-iron protein alpha chain (518 aa).

Residues C49, C75, and C138 each contribute to the [8Fe-7S] cluster site. Residues C257 and H423 each coordinate [8Fe-9S-C-homocitryl] cluster.

The protein belongs to the NifD/NifK/NifE/NifN family. In terms of assembly, hexamer of two alpha, two beta, and two delta chains. Requires [8Fe-7S] cluster as cofactor. [8Fe-9S-C-homocitryl] cluster serves as cofactor.

The catalysed reaction is N2 + 8 reduced [2Fe-2S]-[ferredoxin] + 16 ATP + 16 H2O = H2 + 8 oxidized [2Fe-2S]-[ferredoxin] + 2 NH4(+) + 16 ADP + 16 phosphate + 6 H(+). Its function is as follows. This iron-iron protein is part of the nitrogenase complex that catalyzes the key enzymatic reactions in nitrogen fixation. Other nitrogenase complexes utilize a molybdenum-iron protein or a vanadium-iron protein. This chain is Nitrogenase iron-iron protein alpha chain (anfD), found in Azotobacter vinelandii.